We begin with the raw amino-acid sequence, 237 residues long: Dynein axonemal assembly factor 19 (237 aa).

A coiled-coil region spans residues 8–33 (NFKALEKELQAALAADEKYKRENAAK).

This sequence belongs to the DNAAF19/PR46b family. In terms of assembly, homodimer.

It localises to the cytoplasm. The protein resides in the cell projection. It is found in the cilium. Its subcellular location is the flagellum. In terms of biological role, dynein-attachment factor required for cilia motility. The sequence is that of Dynein axonemal assembly factor 19 (Dnaaf19) from Mus musculus (Mouse).